We begin with the raw amino-acid sequence, 370 residues long: Holliday junction branch migration complex subunit RuvB (370 aa).

The segment at Met1–Tyr182 is large ATPase domain (RuvB-L). ATP contacts are provided by residues Leu21, Arg22, Gly63, Lys66, Thr67, Thr68, Glu129–Phe131, Arg172, Tyr182, and Arg219. Thr67 provides a ligand contact to Mg(2+). The segment at Arg183–Glu253 is small ATPAse domain (RuvB-S). The head domain (RuvB-H) stretch occupies residues Pro256–Glu370. DNA contacts are provided by Arg311 and Arg316.

The protein belongs to the RuvB family. As to quaternary structure, homohexamer. Forms an RuvA(8)-RuvB(12)-Holliday junction (HJ) complex. HJ DNA is sandwiched between 2 RuvA tetramers; dsDNA enters through RuvA and exits via RuvB. An RuvB hexamer assembles on each DNA strand where it exits the tetramer. Each RuvB hexamer is contacted by two RuvA subunits (via domain III) on 2 adjacent RuvB subunits; this complex drives branch migration. In the full resolvosome a probable DNA-RuvA(4)-RuvB(12)-RuvC(2) complex forms which resolves the HJ.

Its subcellular location is the cytoplasm. It carries out the reaction ATP + H2O = ADP + phosphate + H(+). The RuvA-RuvB-RuvC complex processes Holliday junction (HJ) DNA during genetic recombination and DNA repair, while the RuvA-RuvB complex plays an important role in the rescue of blocked DNA replication forks via replication fork reversal (RFR). RuvA specifically binds to HJ cruciform DNA, conferring on it an open structure. The RuvB hexamer acts as an ATP-dependent pump, pulling dsDNA into and through the RuvAB complex. RuvB forms 2 homohexamers on either side of HJ DNA bound by 1 or 2 RuvA tetramers; 4 subunits per hexamer contact DNA at a time. Coordinated motions by a converter formed by DNA-disengaged RuvB subunits stimulates ATP hydrolysis and nucleotide exchange. Immobilization of the converter enables RuvB to convert the ATP-contained energy into a lever motion, pulling 2 nucleotides of DNA out of the RuvA tetramer per ATP hydrolyzed, thus driving DNA branch migration. The RuvB motors rotate together with the DNA substrate, which together with the progressing nucleotide cycle form the mechanistic basis for DNA recombination by continuous HJ branch migration. Branch migration allows RuvC to scan DNA until it finds its consensus sequence, where it cleaves and resolves cruciform DNA. This is Holliday junction branch migration complex subunit RuvB from Heliobacterium modesticaldum (strain ATCC 51547 / Ice1).